A 389-amino-acid polypeptide reads, in one-letter code: Phospho-N-acetylmuramoyl-pentapeptide-transferase (389 aa).

Helical transmembrane passes span 21-41, 70-90, 97-117, 134-154, 189-209, 222-242, 259-279, 286-306, 311-331, and 366-386; these read FITF…LFFG, GTPT…TLLW, FVWV…VDDY, YMWQ…SVSA, TISY…VIVG, GLAI…AYLT, AGEL…FLWF, VFMG…IAVI, IVLF…MIQV, and QVVV…LSTL.

Belongs to the glycosyltransferase 4 family. MraY subfamily. Mg(2+) is required as a cofactor.

The protein localises to the cell inner membrane. It catalyses the reaction UDP-N-acetyl-alpha-D-muramoyl-L-alanyl-gamma-D-glutamyl-meso-2,6-diaminopimeloyl-D-alanyl-D-alanine + di-trans,octa-cis-undecaprenyl phosphate = di-trans,octa-cis-undecaprenyl diphospho-N-acetyl-alpha-D-muramoyl-L-alanyl-D-glutamyl-meso-2,6-diaminopimeloyl-D-alanyl-D-alanine + UMP. The protein operates within cell wall biogenesis; peptidoglycan biosynthesis. Functionally, catalyzes the initial step of the lipid cycle reactions in the biosynthesis of the cell wall peptidoglycan: transfers peptidoglycan precursor phospho-MurNAc-pentapeptide from UDP-MurNAc-pentapeptide onto the lipid carrier undecaprenyl phosphate, yielding undecaprenyl-pyrophosphoryl-MurNAc-pentapeptide, known as lipid I. The chain is Phospho-N-acetylmuramoyl-pentapeptide-transferase from Herminiimonas arsenicoxydans.